The following is a 185-amino-acid chain: Ribosome-recycling factor (185 aa).

Residues 135-159 (ANDEVKKLEKDKAITEDESKKGQDE) are disordered.

Belongs to the RRF family.

The protein resides in the cytoplasm. Functionally, responsible for the release of ribosomes from messenger RNA at the termination of protein biosynthesis. May increase the efficiency of translation by recycling ribosomes from one round of translation to another. This is Ribosome-recycling factor from Campylobacter curvus (strain 525.92).